A 30-amino-acid chain; its full sequence is Alpha-defensin PhD-4 (30 aa).

Disulfide bonds link C2–C30, C4–C19, and C9–C29.

The protein resides in the secreted. In terms of biological role, in low salt conditions, has antibacterial activity against the Gram-negative bacterium E.coli ML35p (MIC=2.4 uM), the Gram-positive bacteria L.monocytogenes EGD (MIC=2.2 uM) and methicillin-resistant S.aureus ATCC 33591 (MIC=3.5 uM), and the fungus C.albicans 820 (MIC=3.9 uM). At high physiological salt concentrations the antimicrobial activity decreases significantly: E.coli ML35p (MIC=7.1 uM), L.monocytogenes EGD (MIC=1.8 uM), S.aureus ATCC 33591 (MIC=&gt;50 uM), and C.albicans 820 (MIC=&gt;50 uM). The sequence is that of Alpha-defensin PhD-4 from Papio hamadryas (Hamadryas baboon).